The primary structure comprises 572 residues: Urease subunit alpha (572 aa).

The 439-residue stretch at Ala-134–Gly-572 folds into the Urease domain. Ni(2+) contacts are provided by His-139, His-141, and Lys-222. Residue Lys-222 is modified to N6-carboxylysine. Position 224 (His-224) interacts with substrate. The Ni(2+) site is built by His-251 and His-277. His-325 serves as the catalytic Proton donor. Asp-365 provides a ligand contact to Ni(2+).

This sequence belongs to the metallo-dependent hydrolases superfamily. Urease alpha subunit family. As to quaternary structure, heterotrimer of UreA (gamma), UreB (beta) and UreC (alpha) subunits. Three heterotrimers associate to form the active enzyme. The cofactor is Ni cation. Carboxylation allows a single lysine to coordinate two nickel ions.

The protein localises to the cytoplasm. The catalysed reaction is urea + 2 H2O + H(+) = hydrogencarbonate + 2 NH4(+). The protein operates within nitrogen metabolism; urea degradation; CO(2) and NH(3) from urea (urease route): step 1/1. This chain is Urease subunit alpha, found in Yersinia pseudotuberculosis serotype O:1b (strain IP 31758).